Reading from the N-terminus, the 273-residue chain is 2,3,4,5-tetrahydropyridine-2,6-dicarboxylate N-succinyltransferase (273 aa).

Substrate contacts are provided by arginine 104 and aspartate 141.

The protein belongs to the transferase hexapeptide repeat family. Homotrimer.

It localises to the cytoplasm. It carries out the reaction (S)-2,3,4,5-tetrahydrodipicolinate + succinyl-CoA + H2O = (S)-2-succinylamino-6-oxoheptanedioate + CoA. It functions in the pathway amino-acid biosynthesis; L-lysine biosynthesis via DAP pathway; LL-2,6-diaminopimelate from (S)-tetrahydrodipicolinate (succinylase route): step 1/3. The chain is 2,3,4,5-tetrahydropyridine-2,6-dicarboxylate N-succinyltransferase from Psychrobacter cryohalolentis (strain ATCC BAA-1226 / DSM 17306 / VKM B-2378 / K5).